The sequence spans 418 residues: Endoglucanase EG-II (418 aa).

A signal peptide spans 1 to 21 (MNKSVAPLLLAASILYGGAAA). Position 22 is a pyrrolidone carboxylic acid (glutamine 22). The CBM1 domain occupies 22–57 (QQTVWGQCGGIGWSGPTNCAPGSACSTLNPYYAQCI). The segment at 58-91 (PGATTITTSTRPPSGPTTTTRATSTSSSTPPTSS) is linker. The interval 63 to 91 (ITTSTRPPSGPTTTTRATSTSSSTPPTSS) is disordered. The interval 92 to 418 (GVRFAGVNIA…SLVSSCLARK (327 aa)) is catalytic. Cysteine 107 and cysteine 113 form a disulfide bridge. Residue asparagine 124 is glycosylated (N-linked (GlcNAc) asparagine). Cysteine 183 and cysteine 190 are disulfide-bonded. Residue glutamate 239 is the Proton donor/acceptor of the active site. Intrachain disulfides connect cysteine 323–cysteine 359 and cysteine 364–cysteine 414. Glutamate 350 serves as the catalytic Nucleophile.

The protein belongs to the glycosyl hydrolase 5 (cellulase A) family.

The protein localises to the secreted. The enzyme catalyses Endohydrolysis of (1-&gt;4)-beta-D-glucosidic linkages in cellulose, lichenin and cereal beta-D-glucans.. In terms of biological role, endoglucanase (EG) that cleaves the internal beta-1,4-glucosidic bonds in cellulose. The degradation of cellulose involves an interplay between different cellulolytic enzymes. Hydrolysis starts with EGs, which cut internal glycosidic linkages to reduce the polymerization degree of the substrate and creates new chain ends for exocellobiohydrolases (CBHs). The CBH release the disaccharide cellobiose from the non-reducing end of the cellulose polymer chain. Finally, beta-1,4-glucosidases hydrolyze the cellobiose and other short cello-oligosaccharides into glucose units. This chain is Endoglucanase EG-II (egl2), found in Hypocrea jecorina (strain ATCC 56765 / BCRC 32924 / NRRL 11460 / Rut C-30) (Trichoderma reesei).